A 202-amino-acid polypeptide reads, in one-letter code: N-(5'-phosphoribosyl)anthranilate isomerase (202 aa).

Belongs to the TrpF family.

It catalyses the reaction N-(5-phospho-beta-D-ribosyl)anthranilate = 1-(2-carboxyphenylamino)-1-deoxy-D-ribulose 5-phosphate. The protein operates within amino-acid biosynthesis; L-tryptophan biosynthesis; L-tryptophan from chorismate: step 3/5. This Listeria monocytogenes serotype 4a (strain HCC23) protein is N-(5'-phosphoribosyl)anthranilate isomerase.